A 373-amino-acid chain; its full sequence is Anhydro-N-acetylmuramic acid kinase (373 aa).

Residue 12-19 participates in ATP binding; that stretch reads GTSLDGVD.

It belongs to the anhydro-N-acetylmuramic acid kinase family.

It catalyses the reaction 1,6-anhydro-N-acetyl-beta-muramate + ATP + H2O = N-acetyl-D-muramate 6-phosphate + ADP + H(+). It participates in amino-sugar metabolism; 1,6-anhydro-N-acetylmuramate degradation. It functions in the pathway cell wall biogenesis; peptidoglycan recycling. Its function is as follows. Catalyzes the specific phosphorylation of 1,6-anhydro-N-acetylmuramic acid (anhMurNAc) with the simultaneous cleavage of the 1,6-anhydro ring, generating MurNAc-6-P. Is required for the utilization of anhMurNAc either imported from the medium or derived from its own cell wall murein, and thus plays a role in cell wall recycling. In Erwinia tasmaniensis (strain DSM 17950 / CFBP 7177 / CIP 109463 / NCPPB 4357 / Et1/99), this protein is Anhydro-N-acetylmuramic acid kinase.